A 348-amino-acid polypeptide reads, in one-letter code: uncharacterized protein (348 aa).

Its function is as follows. May be involved in apoptosis regulation. This is an uncharacterized protein from Rattus norvegicus (Rat).